Here is a 180-residue protein sequence, read N- to C-terminus: Trichosurin (180 aa).

Positions 1-15 (MKLLLLSMGLALVCG) are cleaved as a signal peptide. 2 N-linked (GlcNAc...) asparagine glycosylation sites follow: Asn67 and Asn148. Cys87 and Cys180 are joined by a disulfide.

This sequence belongs to the calycin superfamily. Lipocalin family. As to quaternary structure, homodimer. In terms of tissue distribution, milk.

The protein localises to the secreted. The protein is Trichosurin of Trichosurus vulpecula (Brush-tailed possum).